A 305-amino-acid polypeptide reads, in one-letter code: Nucleotide-binding protein Saro_2904 (305 aa).

15 to 22 (GLLGAGKT) is a binding site for ATP. 68–71 (DTRT) is a binding site for GTP.

This sequence belongs to the RapZ-like family.

Its function is as follows. Displays ATPase and GTPase activities. This Novosphingobium aromaticivorans (strain ATCC 700278 / DSM 12444 / CCUG 56034 / CIP 105152 / NBRC 16084 / F199) protein is Nucleotide-binding protein Saro_2904.